Consider the following 118-residue polypeptide: Evasin P546 (118 aa).

Residues M1 to A21 form the signal peptide. Disulfide bonds link C38/C59, C55/C96, C72/C101, and C91/C110. N45 is a glycosylation site (N-linked (GlcNAc...) asparagine).

The protein localises to the secreted. Functionally, salivary chemokine-binding protein which binds to host chemokines CCL1, CCL3, CCL5 and CCL22. This chain is Evasin P546, found in Amblyomma cajennense (Cayenne tick).